The sequence spans 368 residues: Cytochrome P450 119 (368 aa).

6 residues coordinate heme: H76, R80, T257, R259, H315, and C317.

The protein belongs to the cytochrome P450 family. Heme is required as a cofactor.

The protein localises to the cytoplasm. It carries out the reaction 2 a phenolic donor + H2O2 = 2 a phenolic radical donor + 2 H2O. Its function is as follows. The endogenous substrate is not known. In vitro, catalyzes the H(2)O(2)-dependent epoxidation of styrene, cis-beta-methylstyrene, and cis-stilbene with retention of stereochemistry. Is able to use cumene hydroperoxide (CHP) or tert-butyl hydroperoxide (TBHP) instead of H(2)O(2) as the electron acceptor. Can also hydroxylate fatty acids such as lauric acid. The chain is Cytochrome P450 119 (cyp119) from Sulfolobus acidocaldarius (strain ATCC 33909 / DSM 639 / JCM 8929 / NBRC 15157 / NCIMB 11770).